Reading from the N-terminus, the 502-residue chain is MAFPIPARQLFIDGEWREPLLKNRIPIINPSTEEIIGDIPAATAEDVEVAVVAARKAFKRNKGRDWAALWSHRAKYLRAIAAKITEKKDHFVKLETLDSGKPRDEAVLDIDDVATCFEYFEYFAGQAEALDAKQKAPVTLPMERFKSHVLRQPIGVVGLISPWNYPLLMDTWKIAPALAAGCTTVLKPSELASVTCLEFGEVCNEVGLPPGVLNILTGLGPDAGAPIVSHPDIDKVAFTGSSATGSKIMASAAQLVKPVTLELGGKSPVIMFEDIDIETAVEWTLFGVFWTNGQICSATSRLLVHESIAAEFVDRMVKWTKNIKISDPFEEGCRLGPVISKGQYDKIMKFISTAKSEGATILCGGSRPEHLKKGYYIEPTIITDITTSMQIWKEEVFGPVICVKTFKTEDEAIELANDTEYGLAGAVFSKDLERCERVTKALEVGAVWVNCSQPCFVHAPWGGVKRSGFGRELGEWGIENYLNIKQVTSDISDEPWGWYKSP.

The N-terminal 7 residues, M1–A7, are a transit peptide targeting the chloroplast. NAD(+) is bound at residue G240–G245. Residue E262 is the Proton acceptor of the active site. The Nucleophile role is filled by C296.

Belongs to the aldehyde dehydrogenase family. Homodimer.

It is found in the plastid. The protein resides in the chloroplast. The enzyme catalyses betaine aldehyde + NAD(+) + H2O = glycine betaine + NADH + 2 H(+). It participates in amine and polyamine biosynthesis; betaine biosynthesis via choline pathway; betaine from betaine aldehyde: step 1/1. This Atriplex hortensis (Mountain spinach) protein is Betaine aldehyde dehydrogenase, chloroplastic.